An 883-amino-acid chain; its full sequence is AP-5 complex subunit beta-1 (883 aa).

Probably part of the adaptor protein complex 5 (AP-5).

Its function is as follows. As part of AP-5, a probable fifth adaptor protein complex, it may be involved in endosomal transport. In Xenopus tropicalis (Western clawed frog), this protein is AP-5 complex subunit beta-1 (ap5b1).